A 341-amino-acid polypeptide reads, in one-letter code: Fructose-1,6-bisphosphatase, cytosolic (341 aa).

Positions 71, 100, 121, 123, and 124 each coordinate Mg(2+). Residues 124 to 127, Asn-215, Tyr-247, Tyr-267, and Lys-277 contribute to the substrate site; that span reads DGCS. Glu-283 lines the Mg(2+) pocket.

The protein belongs to the FBPase class 1 family. Requires Mg(2+) as cofactor.

It localises to the cytoplasm. It carries out the reaction beta-D-fructose 1,6-bisphosphate + H2O = beta-D-fructose 6-phosphate + phosphate. In Beta vulgaris (Sugar beet), this protein is Fructose-1,6-bisphosphatase, cytosolic.